We begin with the raw amino-acid sequence, 243 residues long: MYEVKLDAFNGPLDLLLHLIQKFEIDIYDIPMQALTEQYMQYVHAMKQLEINIASEYLVLASELLMIKSKMLLPQSTSDMDVDDDPREDLVGRLIEYQNYKEYTAILNDMKEERDFYFTKRPTDLSHLETDESWDPNHTIDLTELIVAYQRVKNRVELNTPKSVEIRKETFTIQQATEQVTSRLKDKDHFNFFSLFTFSEPIEQVVTHFLAILEMSKAGIINIEQQRNFEDINIIRGVNYHFG.

This sequence belongs to the ScpA family. As to quaternary structure, component of a cohesin-like complex composed of ScpA, ScpB and the Smc homodimer, in which ScpA and ScpB bind to the head domain of Smc. The presence of the three proteins is required for the association of the complex with DNA.

It localises to the cytoplasm. In terms of biological role, participates in chromosomal partition during cell division. May act via the formation of a condensin-like complex containing Smc and ScpB that pull DNA away from mid-cell into both cell halves. In Staphylococcus aureus (strain NCTC 8325 / PS 47), this protein is Segregation and condensation protein A.